We begin with the raw amino-acid sequence, 154 residues long: UPF0547 protein C16orf87 homolog (154 aa).

Residues 46–119 (HPEKAPSSTE…KHEEEREKQE (74 aa)) form a disordered region. The span at 68 to 84 (VRREKINSTVNKDLENR) shows a compositional bias: basic and acidic residues. A Phosphoserine modification is found at serine 91. The stretch at 104–132 (KSASAKKHEEEREKQEKEIDIYANLSDEK) forms a coiled coil. Residues 109–119 (KKHEEEREKQE) are compositionally biased toward basic and acidic residues.

It belongs to the UPF0547 family.

In Bos taurus (Bovine), this protein is UPF0547 protein C16orf87 homolog.